The following is a 201-amino-acid chain: Peptidyl-tRNA hydrolase (201 aa).

Position 14 (Y14) interacts with tRNA. H19 functions as the Proton acceptor in the catalytic mechanism. Residues Y64, N66, and N112 each coordinate tRNA.

It belongs to the PTH family. Monomer.

The protein resides in the cytoplasm. The enzyme catalyses an N-acyl-L-alpha-aminoacyl-tRNA + H2O = an N-acyl-L-amino acid + a tRNA + H(+). Functionally, hydrolyzes ribosome-free peptidyl-tRNAs (with 1 or more amino acids incorporated), which drop off the ribosome during protein synthesis, or as a result of ribosome stalling. In terms of biological role, catalyzes the release of premature peptidyl moieties from peptidyl-tRNA molecules trapped in stalled 50S ribosomal subunits, and thus maintains levels of free tRNAs and 50S ribosomes. In Bradyrhizobium sp. (strain ORS 278), this protein is Peptidyl-tRNA hydrolase.